Consider the following 147-residue polypeptide: Ribonuclease 4 (147 aa).

The N-terminal stretch at 1-28 (MALQRTHSLLLLLLLTLLGLGLVQPSYG) is a signal peptide. Position 29 is a pyrrolidone carboxylic acid (Gln29). The dUMP site is built by Arg35, His40, Lys68, Asn71, and Thr72. Catalysis depends on His40, which acts as the Proton acceptor. 4 cysteine pairs are disulfide-bonded: Cys53-Cys109, Cys67-Cys120, Cys85-Cys135, and Cys92-Cys99. His144 acts as the Proton donor in catalysis. Phe145 provides a ligand contact to dUMP.

This sequence belongs to the pancreatic ribonuclease family.

It localises to the secreted. Cleaves preferentially after uridine bases. Has antimicrobial activity against uropathogenic E.coli (UPEC). Probably contributes to urinary tract sterility. The polypeptide is Ribonuclease 4 (RNASE4) (Pan troglodytes (Chimpanzee)).